The chain runs to 287 residues: UPF0276 protein ACIAD0933 (287 aa).

This sequence belongs to the UPF0276 family.

In Acinetobacter baylyi (strain ATCC 33305 / BD413 / ADP1), this protein is UPF0276 protein ACIAD0933.